The chain runs to 343 residues: Farnesyl pyrophosphate synthase (343 aa).

Isopentenyl diphosphate contacts are provided by Lys-49, Arg-52, and Gln-87. Positions 94 and 98 each coordinate Mg(2+). Arg-103 is a dimethylallyl diphosphate binding site. Arg-104 contacts isopentenyl diphosphate. Residues Lys-191, Thr-192, Gln-230, Lys-247, and Lys-256 each coordinate dimethylallyl diphosphate.

The protein belongs to the FPP/GGPP synthase family. The cofactor is Mg(2+). In terms of tissue distribution, expressed both in apical and sub-apical cells of glandular secretory trichomes.

It is found in the cytoplasm. The protein resides in the nucleus. It carries out the reaction isopentenyl diphosphate + dimethylallyl diphosphate = (2E)-geranyl diphosphate + diphosphate. It catalyses the reaction isopentenyl diphosphate + (2E)-geranyl diphosphate = (2E,6E)-farnesyl diphosphate + diphosphate. The protein operates within isoprenoid biosynthesis; farnesyl diphosphate biosynthesis; farnesyl diphosphate from geranyl diphosphate and isopentenyl diphosphate: step 1/1. Its pathway is sesquiterpene biosynthesis. It participates in isoprenoid biosynthesis; geranyl diphosphate biosynthesis; geranyl diphosphate from dimethylallyl diphosphate and isopentenyl diphosphate: step 1/1. Involved in the biosynthesis of the antimalarial endoperoxide artemisinin. Catalyzes the sequential condensation of isopentenyl pyrophosphate with the allylic pyrophosphates, dimethylallyl pyrophosphate, and then with the resultant geranylpyrophosphate to the ultimate product farnesyl pyrophosphate. Promotes anti-malarial and antimicrobial (toward Gram-positive bacteria B.subtilis and S.aureus) activities of plant crude extract probably by triggering artemisinin levels. The polypeptide is Farnesyl pyrophosphate synthase (Artemisia annua (Sweet wormwood)).